We begin with the raw amino-acid sequence, 89 residues long: Small ribosomal subunit protein bS18 (89 aa).

The protein belongs to the bacterial ribosomal protein bS18 family. Part of the 30S ribosomal subunit. Forms a tight heterodimer with protein bS6.

Its function is as follows. Binds as a heterodimer with protein bS6 to the central domain of the 16S rRNA, where it helps stabilize the platform of the 30S subunit. In Parabacteroides distasonis (strain ATCC 8503 / DSM 20701 / CIP 104284 / JCM 5825 / NCTC 11152), this protein is Small ribosomal subunit protein bS18.